Here is a 574-residue protein sequence, read N- to C-terminus: Proline--tRNA ligase (574 aa).

Belongs to the class-II aminoacyl-tRNA synthetase family. ProS type 1 subfamily. Homodimer.

The protein localises to the cytoplasm. It catalyses the reaction tRNA(Pro) + L-proline + ATP = L-prolyl-tRNA(Pro) + AMP + diphosphate. In terms of biological role, catalyzes the attachment of proline to tRNA(Pro) in a two-step reaction: proline is first activated by ATP to form Pro-AMP and then transferred to the acceptor end of tRNA(Pro). As ProRS can inadvertently accommodate and process non-cognate amino acids such as alanine and cysteine, to avoid such errors it has two additional distinct editing activities against alanine. One activity is designated as 'pretransfer' editing and involves the tRNA(Pro)-independent hydrolysis of activated Ala-AMP. The other activity is designated 'posttransfer' editing and involves deacylation of mischarged Ala-tRNA(Pro). The misacylated Cys-tRNA(Pro) is not edited by ProRS. The polypeptide is Proline--tRNA ligase (Desulfovibrio desulfuricans (strain ATCC 27774 / DSM 6949 / MB)).